The primary structure comprises 81 residues: Trefoil factor 3 (81 aa).

The N-terminal stretch at 1–23 (MEARTFWLLVVAVLALGSSSSTG) is a signal peptide. One can recognise a P-type domain in the interval 31–74 (NQCAVPAKDRVDCGYPEVTPEQCNNRGCCFDSSIHGVPWCFKPL). 3 disulfides stabilise this stretch: Cys-33–Cys-59, Cys-43–Cys-58, and Cys-53–Cys-70.

As to quaternary structure, monomer. Homodimer; disulfide-linked.

It localises to the secreted. The protein resides in the extracellular space. The protein localises to the extracellular matrix. Its subcellular location is the cytoplasm. Functionally, involved in the maintenance and repair of the intestinal mucosa. Promotes the mobility of epithelial cells in healing processes (motogen). This Bos taurus (Bovine) protein is Trefoil factor 3 (TFF3).